We begin with the raw amino-acid sequence, 104 residues long: Pterin-4-alpha-carbinolamine dehydratase (104 aa).

Ala-2 is subject to N-acetylalanine. Residues 61 to 63 and 78 to 81 each bind substrate; these read DHH and STHD.

Belongs to the pterin-4-alpha-carbinolamine dehydratase family. Homotetramer and homodimer.

Its subcellular location is the cytoplasm. It is found in the nucleus. It catalyses the reaction (4aS,6R)-4a-hydroxy-L-erythro-5,6,7,8-tetrahydrobiopterin = (6R)-L-erythro-6,7-dihydrobiopterin + H2O. Involved in tetrahydrobiopterin biosynthesis. Seems to both prevent the formation of 7-pterins and accelerate the formation of quinonoid-BH2. Coactivator for HNF1A-dependent transcription. Regulates the dimerization of homeodomain protein HNF1A and enhances its transcriptional activity. Also acts as a coactivator for HNF1B-dependent transcription. In Xenopus laevis (African clawed frog), this protein is Pterin-4-alpha-carbinolamine dehydratase (pcbd).